Here is a 686-residue protein sequence, read N- to C-terminus: Chromatin modification-related protein EAF1 (686 aa).

The interval Q71–K97 is disordered. The region spanning F202–V280 is the HSA domain. Positions I354–K418 constitute a Myb-like domain. Disordered regions lie at residues R493 to T517, A544 to R617, and Q657 to A686. Polar residues predominate over residues A497 to T506. The span at A554 to K568 shows a compositional bias: pro residues. The span at T574–H588 shows a compositional bias: polar residues. The span at L599 to Q613 shows a compositional bias: low complexity. Positions Q671–A686 are enriched in polar residues.

This sequence belongs to the EAF1 family. As to quaternary structure, component of the NuA4 histone acetyltransferase complex.

The protein localises to the nucleus. In terms of biological role, component of the NuA4 histone acetyltransferase complex which is involved in transcriptional activation of selected genes principally by acetylation of nucleosomal histone H4 and H2A. The NuA4 complex is also involved in DNA repair. This chain is Chromatin modification-related protein EAF1 (VID21), found in Candida albicans (strain SC5314 / ATCC MYA-2876) (Yeast).